Consider the following 360-residue polypeptide: Phospho-N-acetylmuramoyl-pentapeptide-transferase (360 aa).

The next 10 helical transmembrane spans lie at 21 to 41, 70 to 90, 97 to 117, 134 to 154, 168 to 188, 199 to 219, 236 to 256, 263 to 283, 288 to 308, and 338 to 358; these read YLTL…FIVG, GTPT…TLLW, YVWA…VDDY, YLWQ…TASS, VVLN…VGSS, GLAI…AYAS, AGEL…FLWF, VFMG…VAVL, IVLM…MLQV, and VIVR…ATLK.

Belongs to the glycosyltransferase 4 family. MraY subfamily. It depends on Mg(2+) as a cofactor.

The protein resides in the cell inner membrane. The enzyme catalyses UDP-N-acetyl-alpha-D-muramoyl-L-alanyl-gamma-D-glutamyl-meso-2,6-diaminopimeloyl-D-alanyl-D-alanine + di-trans,octa-cis-undecaprenyl phosphate = di-trans,octa-cis-undecaprenyl diphospho-N-acetyl-alpha-D-muramoyl-L-alanyl-D-glutamyl-meso-2,6-diaminopimeloyl-D-alanyl-D-alanine + UMP. It participates in cell wall biogenesis; peptidoglycan biosynthesis. Catalyzes the initial step of the lipid cycle reactions in the biosynthesis of the cell wall peptidoglycan: transfers peptidoglycan precursor phospho-MurNAc-pentapeptide from UDP-MurNAc-pentapeptide onto the lipid carrier undecaprenyl phosphate, yielding undecaprenyl-pyrophosphoryl-MurNAc-pentapeptide, known as lipid I. This chain is Phospho-N-acetylmuramoyl-pentapeptide-transferase, found in Methylococcus capsulatus (strain ATCC 33009 / NCIMB 11132 / Bath).